The following is a 184-amino-acid chain: Thymidine kinase (184 aa).

ATP-binding positions include 10–17 (GPMYSGKT) and 83–86 (DEVQ). The Proton acceptor role is filled by glutamate 84. The Zn(2+) site is built by cysteine 140, cysteine 143, cysteine 173, and cysteine 176.

The protein belongs to the thymidine kinase family. As to quaternary structure, homotetramer.

It is found in the cytoplasm. The catalysed reaction is thymidine + ATP = dTMP + ADP + H(+). The chain is Thymidine kinase from Thermotoga petrophila (strain ATCC BAA-488 / DSM 13995 / JCM 10881 / RKU-1).